A 625-amino-acid chain; its full sequence is Alpha-amylase 1 (625 aa).

The signal sequence occupies residues 1 to 22 (MGFSKIALFSLFALFGLPTSLA). A disulfide bond links Cys-51 and Cys-59. A substrate-binding site is contributed by Trp-105. Asn-143 provides a ligand contact to Ca(2+). N-linked (GlcNAc...) asparagine glycosylation is found at Asn-153, Asn-163, and Asn-180. Cys-172 and Cys-187 are disulfide-bonded. Residues Glu-185 and Asp-198 each contribute to the Ca(2+) site. A substrate-binding site is contributed by Arg-227. Asp-229 lines the Ca(2+) pocket. Asp-229 serves as the catalytic Nucleophile. Substrate is bound at residue 232–233 (KQ). N-linked (GlcNAc...) asparagine glycosylation occurs at Asn-241. Glu-253 contributes to the Ca(2+) binding site. Glu-253 (proton donor) is an active-site residue. N-linked (GlcNAc...) asparagine glycans are attached at residues Asn-260 and Asn-286. A disulfide bond links Cys-263 and Cys-306. A substrate-binding site is contributed by Asp-322. N-linked (GlcNAc...) asparagine glycosylation occurs at Asn-331. Position 370 (Arg-370) interacts with substrate. Asn-440 and Asn-461 each carry an N-linked (GlcNAc...) asparagine glycan. The interval 526–579 (SATSSSKSSSSSSSRSGSSSSSSSRSGSTSSSGSSHTITSTSQSVHTSGSSTST) is disordered. The GPI-anchor amidated serine moiety is linked to residue Ser-603. Residues 604 to 625 (SANAVRVSILGVAAFIAIVLFI) constitute a propeptide, removed in mature form.

Belongs to the glycosyl hydrolase 13 family. Ca(2+) is required as a cofactor.

Its subcellular location is the cell membrane. It catalyses the reaction Endohydrolysis of (1-&gt;4)-alpha-D-glucosidic linkages in polysaccharides containing three or more (1-&gt;4)-alpha-linked D-glucose units.. This Schizosaccharomyces pombe (strain 972 / ATCC 24843) (Fission yeast) protein is Alpha-amylase 1 (aah1).